The sequence spans 316 residues: Transaldolase (316 aa).

The Schiff-base intermediate with substrate role is filled by lysine 132.

This sequence belongs to the transaldolase family. Type 1 subfamily.

It localises to the cytoplasm. It catalyses the reaction D-sedoheptulose 7-phosphate + D-glyceraldehyde 3-phosphate = D-erythrose 4-phosphate + beta-D-fructose 6-phosphate. Its pathway is carbohydrate degradation; pentose phosphate pathway; D-glyceraldehyde 3-phosphate and beta-D-fructose 6-phosphate from D-ribose 5-phosphate and D-xylulose 5-phosphate (non-oxidative stage): step 2/3. Its function is as follows. Transaldolase is important for the balance of metabolites in the pentose-phosphate pathway. This chain is Transaldolase, found in Vibrio cholerae serotype O1 (strain ATCC 39315 / El Tor Inaba N16961).